The following is a 328-amino-acid chain: WUSCHEL-related homeobox 6 (328 aa).

The span at Met1 to Gln11 shows a compositional bias: polar residues. The segment at Met1 to Pro45 is disordered. Residues Gly23–Ser33 show a composition bias toward gly residues. The homeobox; WUS-type DNA-binding region spans Pro38 to Gln102.

It belongs to the WUS homeobox family.

It localises to the nucleus. In terms of biological role, transcription factor which may be involved in developmental processes. The protein is WUSCHEL-related homeobox 6 (WOX6) of Oryza sativa subsp. japonica (Rice).